We begin with the raw amino-acid sequence, 125 residues long: Holo-[acyl-carrier-protein] synthase (125 aa).

Asp8 and Glu57 together coordinate Mg(2+).

Belongs to the P-Pant transferase superfamily. AcpS family. Mg(2+) is required as a cofactor.

It is found in the cytoplasm. The catalysed reaction is apo-[ACP] + CoA = holo-[ACP] + adenosine 3',5'-bisphosphate + H(+). Transfers the 4'-phosphopantetheine moiety from coenzyme A to a Ser of acyl-carrier-protein. The chain is Holo-[acyl-carrier-protein] synthase from Geotalea daltonii (strain DSM 22248 / JCM 15807 / FRC-32) (Geobacter daltonii).